The sequence spans 102 residues: Large ribosomal subunit protein bL21 (102 aa).

The protein belongs to the bacterial ribosomal protein bL21 family. Part of the 50S ribosomal subunit. Contacts protein L20.

This protein binds to 23S rRNA in the presence of protein L20. The protein is Large ribosomal subunit protein bL21 of Enterococcus faecalis (strain ATCC 700802 / V583).